The sequence spans 570 residues: Protein mom-5 (570 aa).

Residues 1–16 (MHRHILILFLFGCLSA) form the signal peptide. At 17 to 230 (DQRLSSTSIS…FDGRVRRILR (214 aa)) the chain is on the extracellular side. In terms of domain architecture, FZ spans 32–148 (STTRKCEHIT…FPVTDLCVGK (117 aa)). Disulfide bonds link cysteine 37/cysteine 98, cysteine 45/cysteine 91, cysteine 82/cysteine 119, cysteine 108/cysteine 145, and cysteine 112/cysteine 136. A glycan (N-linked (GlcNAc...) asparagine) is linked at asparagine 51. An N-linked (GlcNAc...) asparagine glycan is attached at asparagine 149. The helical transmembrane segment at 231 to 251 (IWTAAWSVACFVCSLFTLVTF) threads the bilayer. Residues 252–264 (LVDLSRFAYPVRP) lie on the Cytoplasmic side of the membrane. A helical membrane pass occupies residues 265 to 285 (ILYLAFCYLAISTVYMIGVVG). Over 286–319 (EDGFACGTYGSTPTTLVTQGGENVGCSALAVVHY) the chain is Extracellular. The chain crosses the membrane as a helical span at residues 320–340 (FFFMSSCAWWLVLCLAWFLAA). The Cytoplasmic segment spans residues 341–348 (NLKWGAES). A helical transmembrane segment spans residues 349 to 369 (IAALSPYFHAMCWGVPAVLSV). Topologically, residues 370-395 (TVLVTNSVDGDVFTGICSVGNLNPSA) are extracellular. A helical transmembrane segment spans residues 396–416 (LVYFFFTPIVVSLALGAVLLV). At 417 to 449 (CGIWSMIRIRSYIKLQHADVERNISKLEKLMLR) the chain is on the cytoplasmic side. The helical transmembrane segment at 450–470 (IGAFAIMYSLPTAMNAAIMWY) threads the bilayer. The Extracellular segment spans residues 471–515 (QAVNMPAWLEGWLHHRCVRLQDRELFGFTYPVDDCPMDPKVAAPE). Residues 516–536 (IIVFLLKYVSQLVVGITCAIW) form a helical membrane-spanning segment. Topologically, residues 537 to 570 (VVSSKTLSSYHKAYLALSSRSPTVPAHVDQVNMR) are cytoplasmic.

The protein belongs to the G-protein coupled receptor Fz/Smo family.

The protein resides in the cell membrane. It is found in the early endosome. Receptor for Wnt proteins. Most frizzled receptors are coupled to the beta-catenin canonical signaling pathway, which leads to the activation of disheveled proteins, inhibition of gsk-3 kinase, nuclear accumulation of beta-catenin and activation of Wnt target genes. A second signaling pathway involving PKC and calcium fluxes has been seen for some family members, but it is not yet clear if it represents a distinct pathway or if it can be integrated in the canonical pathway, as pkc seems to be required for Wnt-mediated inactivation of gsk-3 kinase. Both pathways seem to involve interactions with G-proteins. Required in embryonic development for the correct positioning and orientation of the mitotic spindles and division planes in blastomere cells. During early embryonic cell divisions, directs the asymmetric positioning of transcription factors such as pop-1 and dsh-2 in daughter cells in order to determine cell fate specification. Acts redundantly with other Wnt receptors such as lin-17 to control vulval precursor cell specification and also the polarity of different cell types including distal tip cells, seam cells, AVG interneurons and P-cells and their descendants. Plays a role in the migration of cell types including distal tip cells and the QR neuroblast descendants, QR.p and QR.pa during larval development. Negatively regulates the unc-6/Netrin receptors unc-5 and unc-40 to control distal tip cell polarity and migration. Acts through ced-5/DOCK180 and ced-10/Rac to control both distal tip cell migration and the phagocytic clearance of apoptotic cell corpses. Furthermore, it is also required for the migration and axon guidance of the different neuronal cell types including CAN, ALM, HSN and the two mechanosensory neurons AVM and PVM. Mediates Wnt receptor cfz-2 in directing ALM migration, but may also act redundantly with the Wnt receptors cfz-2 and mig-1 to direct the migration of other neuronal cell types including CAN and HSN. Mediates Wnt ligand egl-20 in the control of the anterior-posterior axon guidance of AVM and PVM neurons. The protein is Protein mom-5 of Caenorhabditis elegans.